The sequence spans 1086 residues: Bifunctional helicase and thymine dioxygenase JBP2 (1086 aa).

Residues M1–L518 are thymine dioxygenase. Residues D187–D220 are disordered. Fe cation contacts are provided by H393, D395, and H443. R457 provides a ligand contact to 2-oxoglutarate. The segment at E519–S1084 is DNA Helicase. The Helicase ATP-binding domain occupies V533–D708. ATP is bound at residue L546 to T553. Positions D659 to H662 match the DEAH box motif. The Helicase C-terminal domain occupies V883–D1041.

The protein in the C-terminal section; belongs to the SNF2/RAD54 helicase family. This sequence in the N-terminal section; belongs to the TET family. JBP2 subfamily. The cofactor is Fe(2+).

It localises to the nucleus. The catalysed reaction is ATP + H2O = ADP + phosphate + H(+). It catalyses the reaction thymine + 2-oxoglutarate + O2 = 5-hydroxymethyluracil + succinate + CO2. Dioxygenase that catalyzes the first step of DNA base J (beta-d-glucosyl-HOMedU) biosynthesis by converting thymine to 5-hydroxymethyluracil (HOMedU). DNA base J is a hypermodified thymidine residue found in the genome of kinetoplastid parasites, which is localized primarily to repetitive DNA, namely the telomeres, and is implicated in the regulation of antigenic variation. Probably also acts as a DNA helicase. Recognizes and binds specific regions of the genome, hydrolyzes ATP and allows the DNA base J de novo synthesis. Involved in initial synthesis of DNA base J, JBP1 being able to act via the basal level of DNA base J and propagate further synthesis. In contrast to JBP1, it does not specifically bind DNA base J, however it binds chromatin. The sequence is that of Bifunctional helicase and thymine dioxygenase JBP2 (JBP2) from Trypanosoma cruzi (strain CL Brener).